The following is a 304-amino-acid chain: MIPNRWRDLARRDIFEPLGLNGSYFIPNAHNRAHVAVASKYSDEVDIDFLDVMACSGGQMSSLSDYIKLMQTFLDPTLPQSLLPAHIMREWMTPVFGFNDDETEVGLLWEIVKIQDSYCRPVRVYEKNGVLGASRSVFAIHREMAFGVALLNTGTATVTGNIALEIFRIMQPYLDKLQERKVKERFAGHWRLPLQTNATSGSMVDISVSDGSLWITRLVLNGTDVLSLTEAMPAFGGARSRRVALWSMRRDEFRMVLGAGAATSCMSSWTAMDSGFSRGYPMDLVYFKGGRLHIPSAGVVLVRA.

This sequence belongs to the beta-lactamase family.

The protein operates within mycotoxin biosynthesis. Beta-lactamase-like protein; part of the gene cluster that mediates the biosynthesis of strobilurin A, an antifungal polyketide that contains a key beta-methoxyacrylate toxophore that targets the complex III of the mitochondrial electron transport chain. Strobilurin biosynthesis begins with construction of benzoyl CoA by step-wise elimination of ammonia from phenylalanine by the phenylalanine ammonia-lyase str11, oxygenation by str8 and retro-Claisen reaction to form benzoic acid, which is activated to its CoA thiolester benzoyl CoA by the dedicated CoA ligase str10. Benzoyl CoA forms the starter unit for the highly reducing polyketide synthase stpks1 that produces the polyketide prestrobilutin A. The FAD-dependent oxygenase str9 then catalyzes the key oxidative rearrangement responsible for the creation of the beta-methoxyacrylate toxophore. Str9 performs epoxidation of the 2,3 olefin of prestrobilutin A, followed by Meinwald rearrangement to furnish the aldehyde intermediate. Rapid enolization of the aldehyde intermediate would give the beta-methoxyacrylate skeleton and methylations catalyzed by str2 and str3 complete the synthesis and lead to the production of strobilurin A. The short-chain dehydrogenase stl2 and the dehydrogenase str4 play a role in the shunt pathway leading to the production of bolineol. The cluster encodes no obvious halogenase gene that could be involved in production of strobilurin B, nor any obvious dimethylallyl-transferase that could be involved in the production of strobilurin G. It is possible that unknown proteins encoded in, or near, the cluster (such as str1 or stl1) may form new classes of halogenases or dimethylally-transferases, or that the responsible genes are located elsewhere on the genome. Similarly, proteins encoded by str5/str6 hydrolases appear to have no chemical role in the biosynthesis of strobilurin A. Finally, no obvious self-resistance gene is found within the cluster. This is Beta-lactamase-like protein str6 from Strobilurus tenacellus.